The sequence spans 1018 residues: UPF0182 protein Tfu_0541 (1018 aa).

Helical transmembrane passes span 20–40 (LAPVGAAVVVIIAGIMFAANF), 64–84 (ALLFAGGALLMALAVGLSVYF), 115–135 (VFFWGLVGGLALLTGASATAE), 171–191 (VIIGYLYTAVVIAFIAGVVVH), 212–232 (VHLSVLLGVFLLLRAADYWLE), 254–274 (AVLYAKIILFFIALVCAVLFF), and 287–307 (VSLGLMVLSAILIGGVYPAIV). 2 disordered regions span residues 497–570 (YPVD…QANN) and 939–965 (GDEAPLEEPTTDGEAREEEEQPQASSD). Acidic residues-rich tracts occupy residues 542–560 (QDQEGQDGGEDAQGTEEEQ) and 939–959 (GDEAPLEEPTTDGEAREEEEQ).

The protein belongs to the UPF0182 family.

The protein localises to the cell membrane. In Thermobifida fusca (strain YX), this protein is UPF0182 protein Tfu_0541.